The primary structure comprises 388 residues: Na(+)/H(+) antiporter NhaA (388 aa).

The Cytoplasmic segment spans residues 1-11 (MKHLHRFFSSD). The chain crosses the membrane as a helical span at residues 12 to 31 (ASGGIILIIAAVLAMIMANS). Residues 32 to 58 (GATSGWYHDFLETPVQLRVGTLEINKN) are Periplasmic-facing. A helical membrane pass occupies residues 59–80 (MLLWINDALMAVFFLLVGLEVK). At 81–96 (RELMQGSLASLRQAAF) the chain is on the cytoplasmic side. The helical transmembrane segment at 97 to 116 (PVIAAIGGMIVPALLYLAFN) threads the bilayer. Residues 117-122 (YADPIT) lie on the Periplasmic side of the membrane. Residues 123-130 (REGWAIPA) form a helical membrane-spanning segment. At 131-154 (ATDIAFALGVLALLGSRVPLALKI) the chain is on the cytoplasmic side. A helical transmembrane segment spans residues 155-176 (FLMALAIIDDLGAIIIIALFYT). Residues 177–180 (NDLS) lie on the Periplasmic side of the membrane. A helical membrane pass occupies residues 181–200 (MASLGVAAVAIAVLVVLNLC). Residues 201–204 (GVRR) lie on the Cytoplasmic side of the membrane. Residues 205 to 222 (TGVYILVGVVLWTAVLKS) form a helical membrane-spanning segment. Residue G223 is a topological domain, periplasmic. Residues 224–236 (VHATLAGVIVGFF) form a helical membrane-spanning segment. The Cytoplasmic segment spans residues 237–253 (IPLKEKHGRSPAKRLEH). Residues 254-272 (VLHPWVAYLILPLFAFANA) form a helical membrane-spanning segment. At 273 to 286 (GVSLQGVTLEGLTS) the chain is on the periplasmic side. The helical transmembrane segment at 287–310 (ILPLGIIAGLLIGKPLGISLFCWL) threads the bilayer. Over 311–339 (ALRLKLAHLPEGTTYQQIMAVGILCGIGF) the chain is Cytoplasmic. The helical transmembrane segment at 340-350 (TMSIFIASLAF) threads the bilayer. Topologically, residues 351-357 (GSVDPEL) are periplasmic. A helical transmembrane segment spans residues 358-380 (INWAKLGILVGSISSAVIGYSWL). Over 381-388 (RVRLRPSV) the chain is Cytoplasmic.

It belongs to the NhaA Na(+)/H(+) (TC 2.A.33) antiporter family.

It localises to the cell inner membrane. The enzyme catalyses Na(+)(in) + 2 H(+)(out) = Na(+)(out) + 2 H(+)(in). Functionally, na(+)/H(+) antiporter that extrudes sodium in exchange for external protons. The protein is Na(+)/H(+) antiporter NhaA of Escherichia coli O1:K1 / APEC.